The following is a 117-amino-acid chain: Putative membrane protein insertion efficiency factor (117 aa).

This sequence belongs to the UPF0161 family.

It localises to the cell inner membrane. Could be involved in insertion of integral membrane proteins into the membrane. The chain is Putative membrane protein insertion efficiency factor from Bartonella quintana (strain Toulouse) (Rochalimaea quintana).